The chain runs to 802 residues: Serine/threonine-protein kinase zyg-8 (802 aa).

The segment covering 1–13 (MPQTSAWQLNDTT) has biased composition (polar residues). Residues 1 to 102 (MPQTSAWQLN…SAPSTSSAHR (102 aa)) are disordered. The segment covering 15-24 (RPPPPPPPPG) has biased composition (pro residues). Low complexity predominate over residues 89-99 (SPSSSAPSTSS). 2 consecutive Doublecortin domains span residues 211–298 (KRLR…VDYS) and 340–423 (RIIK…ADDL). The tract at residues 430-470 (HKSVGSGTSSNMRRTSRRSTMPNRNESLRHDRSGSVIPDQD) is disordered. Residues 434-454 (GSGTSSNMRRTSRRSTMPNRN) show a composition bias toward low complexity. A Protein kinase domain is found at 482-743 (FQLVRLIGDG…AGELLNDEWM (262 aa)). ATP is bound by residues 488–496 (IGDGNTAVV) and K512. The active-site Proton acceptor is D604.

The protein belongs to the protein kinase superfamily. CAMK Ser/Thr protein kinase family. CaMK subfamily. Interacts with tac-1. In terms of tissue distribution, expressed in AFD thermosensory neurons. Expressed in cells near the nerve ring, in motor neurons in the ventral nerve cord and in the six touch receptor neurons including ALML/R, PLML/R and AVM and PVM. Expressed in hypodermal and neural tissues and in the germline.

It is found in the cytoplasm. The protein localises to the cytoskeleton. The protein resides in the microtubule organizing center. It localises to the centrosome. Its subcellular location is the spindle. The catalysed reaction is L-seryl-[protein] + ATP = O-phospho-L-seryl-[protein] + ADP + H(+). It catalyses the reaction L-threonyl-[protein] + ATP = O-phospho-L-threonyl-[protein] + ADP + H(+). Its function is as follows. Probable kinase. Kinase activity may be involved in positioning of spindle poles in meiosis and mitosis. Plays a role in spindle positioning during asymmetric division of one-cell stage embryos. Affects spindle position by promoting microtubule assembly during anaphase. Plays a role in the assembly and stability of oocyte spindle, perhaps balancing the forces in the spindle and maintaining their morphology during metaphase. Plays a role in cell division and in embryonic viability up until gastrulation. Required for neuronal morphology and polarity and restricting ectopic process outgrowth; probably as a result of a role in maintaining microtubule integrity. Involved in maintaining neuronal microtubule number, length and packing. May promote axonal and synaptic growth. Plays a role in regulating thermotaxis responses in AFD thermosensory neurons. Required for touch sensitivity in adult touch response receptor neurons. The chain is Serine/threonine-protein kinase zyg-8 from Caenorhabditis elegans.